Reading from the N-terminus, the 111-residue chain is Large ribosomal subunit protein uL23 (111 aa).

This sequence belongs to the universal ribosomal protein uL23 family. Part of the 50S ribosomal subunit. Contacts protein L29, and trigger factor when it is bound to the ribosome.

In terms of biological role, one of the early assembly proteins it binds 23S rRNA. One of the proteins that surrounds the polypeptide exit tunnel on the outside of the ribosome. Forms the main docking site for trigger factor binding to the ribosome. This chain is Large ribosomal subunit protein uL23, found in Chlamydia felis (strain Fe/C-56) (Chlamydophila felis).